Here is a 185-residue protein sequence, read N- to C-terminus: Ribosome-recycling factor (185 aa).

Positions 163–185 (LTNEATKKIDAISKDKEKEITEG) are disordered. The segment covering 167 to 185 (ATKKIDAISKDKEKEITEG) has biased composition (basic and acidic residues).

The protein belongs to the RRF family.

It is found in the cytoplasm. Its function is as follows. Responsible for the release of ribosomes from messenger RNA at the termination of protein biosynthesis. May increase the efficiency of translation by recycling ribosomes from one round of translation to another. The protein is Ribosome-recycling factor of Latilactobacillus sakei subsp. sakei (strain 23K) (Lactobacillus sakei subsp. sakei).